A 524-amino-acid chain; its full sequence is Mediator of RNA polymerase II transcription subunit 8 (524 aa).

M1 carries the N-acetylmethionine modification. A coiled-coil region spans residues 137–162; it reads MQIERLKARMDMIAAACENAERVLAD. Disordered stretches follow at residues 291–315 and 474–524; these read VPSP…LMQL and MMQT…QNPQ. Low complexity-rich tracts occupy residues 295 to 315 and 474 to 505; these read QHQI…LMQL and MMQT…TNQQ. Polar residues predominate over residues 506–524; sequence SLQPNNMMQNAQQRHQNPQ.

The protein belongs to the Mediator complex subunit 8 family. In terms of assembly, component of the Mediator complex.

It localises to the nucleus. Its function is as follows. Component of the Mediator complex, a coactivator involved in the regulated transcription of nearly all RNA polymerase II-dependent genes. Mediator functions as a bridge to convey information from gene-specific regulatory proteins to the basal RNA polymerase II transcription machinery. The Mediator complex, having a compact conformation in its free form, is recruited to promoters by direct interactions with regulatory proteins and serves for the assembly of a functional preinitiation complex with RNA polymerase II and the general transcription factors. Regulator of both plant defense and flowering time. Involved in pollen tube growth. This Arabidopsis thaliana (Mouse-ear cress) protein is Mediator of RNA polymerase II transcription subunit 8 (MED8).